The chain runs to 384 residues: BarH-like 2 homeobox protein (384 aa).

Disordered regions lie at residues Met1–Thr134, Cys154–Ser237, and Pro364–Arg384. A compositionally biased stretch (low complexity) spans Gln119–Thr134. Basic and acidic residues predominate over residues Glu177–Ser217. Positions Pro229–Thr288 form a DNA-binding region, homeobox.

The protein belongs to the BAR homeobox family. In terms of tissue distribution, expressed in the ganglion cell layer of the retina in the eye and in the ventral zone of the dorsal thalamus of the CNS.

It is found in the nucleus. Functionally, potential regulator of neural basic helix-loop-helix genes. It may down-regulate expression of ASCL1 and, within the thalamus, up-regulate NGN2, thereby regulating distinct patterns of neuronal differentiation. The chain is BarH-like 2 homeobox protein (Barhl2) from Rattus norvegicus (Rat).